The sequence spans 1068 residues: tRNA wybutosine-synthesizing protein 4 (1068 aa).

Residues M1–S31 are disordered. S-adenosyl-L-methionine is bound by residues R81, G107, D134, D181 to L182, and E208. The 149-residue stretch at A876–R1024 folds into the JmjC domain.

This sequence belongs to the methyltransferase superfamily. LCMT family.

It carries out the reaction 7-[(3S)-3-amino-3-carboxypropyl]wyosine(37) in tRNA(Phe) + S-adenosyl-L-methionine = 7-[(3S)-(3-amino-3-methoxycarbonyl)propyl]wyosine(37) in tRNA(Phe) + S-adenosyl-L-homocysteine. The enzyme catalyses 7-[(3S)-(3-amino-3-methoxycarbonyl)propyl]wyosine(37) in tRNA(Phe) + S-adenosyl-L-methionine + CO2 = wybutosine(37) in tRNA(Phe) + S-adenosyl-L-homocysteine + 2 H(+). The protein operates within tRNA modification; wybutosine-tRNA(Phe) biosynthesis. Functionally, probable S-adenosyl-L-methionine-dependent methyltransferase that acts as a component of the wybutosine biosynthesis pathway. Wybutosine is a hyper modified guanosine with a tricyclic base found at the 3'-position adjacent to the anticodon of eukaryotic phenylalanine tRNA. May methylate the carboxyl group of leucine residues to form alpha-leucine ester residues. The sequence is that of tRNA wybutosine-synthesizing protein 4 (ppm2) from Emericella nidulans (strain FGSC A4 / ATCC 38163 / CBS 112.46 / NRRL 194 / M139) (Aspergillus nidulans).